The sequence spans 345 residues: DNA-directed RNA polymerase subunit alpha (345 aa).

The segment at 1–234 is alpha N-terminal domain (alpha-NTD); sequence MRKNEMSTSK…DLLTTFLYVR (234 aa). An alpha C-terminal domain (alpha-CTD) region spans residues 266–345; it reads LEERVLENRF…DKKIVLNRRK (80 aa).

Belongs to the RNA polymerase alpha chain family. As to quaternary structure, in plastids the minimal PEP RNA polymerase catalytic core is composed of four subunits: alpha, beta, beta', and beta''. When a (nuclear-encoded) sigma factor is associated with the core the holoenzyme is formed, which can initiate transcription.

The protein localises to the plastid. It is found in the chloroplast. The catalysed reaction is RNA(n) + a ribonucleoside 5'-triphosphate = RNA(n+1) + diphosphate. Its function is as follows. DNA-dependent RNA polymerase catalyzes the transcription of DNA into RNA using the four ribonucleoside triphosphates as substrates. This Adiantum capillus-veneris (Maidenhair fern) protein is DNA-directed RNA polymerase subunit alpha.